Consider the following 194-residue polypeptide: Adenylate kinase isoenzyme 1 (194 aa).

Residue M1 is modified to N-acetylmethionine. 18–23 provides a ligand contact to ATP; it reads GSGKGT. A Phosphoserine modification is found at S38. The segment at 38–67 is NMP; that stretch reads STGDLLRAEVSSGSSRGKMLSSIMEKGELV. AMP contacts are provided by residues T39, R44, 65-67, 94-97, and Q101; these read ELV and GYPR. The LID stretch occupies residues 131 to 141; the sequence is KRGETSGRVDD. Position 132 (R132) interacts with ATP. R138 and R149 together coordinate AMP. G177 is an ATP binding site.

This sequence belongs to the adenylate kinase family. AK1 subfamily. Monomer. Mg(2+) serves as cofactor.

The protein localises to the cytoplasm. The enzyme catalyses a ribonucleoside 5'-phosphate + ATP = a ribonucleoside 5'-diphosphate + ADP. It catalyses the reaction AMP + ATP = 2 ADP. It carries out the reaction dAMP + ATP = dADP + ADP. The catalysed reaction is dATP + AMP = dADP + ADP. The enzyme catalyses dAMP + dATP = 2 dADP. It catalyses the reaction a 2'-deoxyribonucleoside 5'-diphosphate + ATP = a 2'-deoxyribonucleoside 5'-triphosphate + ADP. It carries out the reaction a ribonucleoside 5'-diphosphate + ATP = a ribonucleoside 5'-triphosphate + ADP. The catalysed reaction is CDP + GTP = CTP + GDP. The enzyme catalyses GDP + ATP = GTP + ADP. It catalyses the reaction UDP + ATP = UTP + ADP. It carries out the reaction GTP + UDP = UTP + GDP. The catalysed reaction is dTDP + GTP = dTTP + GDP. The enzyme catalyses dCDP + GTP = dCTP + GDP. It catalyses the reaction dGDP + ATP = dGTP + ADP. It carries out the reaction dADP + GTP = dATP + GDP. The catalysed reaction is thiamine diphosphate + ADP = thiamine triphosphate + AMP. Catalyzes the reversible transfer of the terminal phosphate group between ATP and AMP. Also displays broad nucleoside diphosphate kinase activity. Plays an important role in cellular energy homeostasis and in adenine nucleotide metabolism. Also catalyzes at a very low rate the synthesis of thiamine triphosphate (ThTP) from thiamine diphosphate (ThDP) and ADP. The sequence is that of Adenylate kinase isoenzyme 1 (Ak1) from Rattus norvegicus (Rat).